The following is a 359-amino-acid chain: tRNA-specific 2-thiouridylase MnmA (359 aa).

ATP-binding positions include 7-14 (AMSGGVDS) and Met-33. Cys-101 acts as the Nucleophile in catalysis. Cys-101 and Cys-198 form a disulfide bridge. Gly-125 is a binding site for ATP. The tract at residues 148 to 150 (KDQ) is interaction with tRNA. Cys-198 serves as the catalytic Cysteine persulfide intermediate.

Belongs to the MnmA/TRMU family.

The protein localises to the cytoplasm. It catalyses the reaction S-sulfanyl-L-cysteinyl-[protein] + uridine(34) in tRNA + AH2 + ATP = 2-thiouridine(34) in tRNA + L-cysteinyl-[protein] + A + AMP + diphosphate + H(+). Functionally, catalyzes the 2-thiolation of uridine at the wobble position (U34) of tRNA, leading to the formation of s(2)U34. The protein is tRNA-specific 2-thiouridylase MnmA of Chloroflexus aggregans (strain MD-66 / DSM 9485).